The chain runs to 302 residues: Cell division protein FtsQ (302 aa).

Positions 1 to 41 are disordered; the sequence is MPAVVRGGPPKPRRPRAEAPASPSKGKPAPRKAQPAAKLHA. Residues 1-50 are Cytoplasmic-facing; sequence MPAVVRGGPPKPRRPRAEAPASPSKGKPAPRKAQPAAKLHAARGVGLSPT. A compositionally biased stretch (low complexity) spans 18-38; that stretch reads EAPASPSKGKPAPRKAQPAAK. The helical transmembrane segment at 51–71 threads the bilayer; it reads VALSVAGAALGLGLVVMLATG. Topologically, residues 72–302 are periplasmic; sequence HRAERLGASM…LPGQPAADGA (231 aa). One can recognise a POTRA domain in the interval 94–162; the sequence is FRLKTVHIRG…DTVLIAVEER (69 aa).

It belongs to the FtsQ/DivIB family. FtsQ subfamily.

The protein resides in the cell inner membrane. Essential cell division protein. The protein is Cell division protein FtsQ of Caulobacter vibrioides (strain ATCC 19089 / CIP 103742 / CB 15) (Caulobacter crescentus).